The sequence spans 98 residues: A-type ATP synthase subunit F (98 aa).

This sequence belongs to the V-ATPase F subunit family. The A-type ATPase is composed of subunits A(3), B(3), C, D, E(1 or 2), F, H(2), I and K(x).

The protein resides in the cell membrane. Functionally, component of the A-type ATP synthase that produces ATP from ADP in the presence of a proton gradient across the membrane. This Methanocaldococcus jannaschii (strain ATCC 43067 / DSM 2661 / JAL-1 / JCM 10045 / NBRC 100440) (Methanococcus jannaschii) protein is A-type ATP synthase subunit F.